A 469-amino-acid polypeptide reads, in one-letter code: MAATTENLPQLKSAVDGLTEMSESEKSGFISLVSRYLSGEAQHIEWSKIQTPTDEIVVPYEKMTPVSQDVAETKNLLDKLVVLKLNGGLGTTMGCTGPKSVIEVRDGLTFLDLIVIQIENLNNKYGCKVPLVLMNSFNTHDDTHKIVEKYTNSNVDIHTFNQSKYPRVVADEFVPWPSKGKTDKEGWYPPGHGDVFPALMNSGKLDTFLSQGKEYVFVANSDNLGAIVDLTILKHLIQNKNEYCMEVTPKTLADVKGGTLISYEGKVQLLEIAQVPDEHVNEFKSIEKFKIFNTNNLWVNLKAIKKLVEADALKMEIIPNPKEVDGVKVLQLETAAGAAIRFFDNAIGVNVPRSRFLPVKASSDLLLVQSDLYTLVDGFVTRNKARTNPSNPSIELGPEFKKVATFLSRFKSIPSIVELDSLKVSGDVWFGSSIVLKGKVTVAAKSGVKLEIPDRAVVENKNINGPEDL.

Ala2 is subject to N-acetylalanine. UTP is bound by residues 85–88 (LNGG), Lys99, Gln162, and Gly191. 87-88 (GG) contacts substrate. Residues His192 and 220–222 (NSD) each bind substrate. UTP-binding residues include Asp222 and Lys360.

The protein belongs to the UDPGP type 1 family. Expressed in cauline leaves, flowers and siliques.

The protein resides in the cytoplasm. The catalysed reaction is alpha-D-glucose 1-phosphate + UTP + H(+) = UDP-alpha-D-glucose + diphosphate. Its function is as follows. Converts glucose 1-phosphate to UDP-glucose, which is the major glycosyl donor for polysaccharides. Acts redundantly with UGP1 and is essential for the synthesis of sucrose, starch and cell wall, and callose deposition. The sequence is that of UTP--glucose-1-phosphate uridylyltransferase 2 from Arabidopsis thaliana (Mouse-ear cress).